The chain runs to 254 residues: tRNA uridine(34) hydroxylase (254 aa).

A Rhodanese domain is found at 123-217; that stretch reads QDPNVILLDT…YLESIPESES (95 aa). C177 serves as the catalytic Cysteine persulfide intermediate.

The protein belongs to the TrhO family.

It carries out the reaction uridine(34) in tRNA + AH2 + O2 = 5-hydroxyuridine(34) in tRNA + A + H2O. Catalyzes oxygen-dependent 5-hydroxyuridine (ho5U) modification at position 34 in tRNAs. The chain is tRNA uridine(34) hydroxylase from Legionella pneumophila (strain Corby).